The following is a 168-amino-acid chain: Peptide deformylase (168 aa).

Cys92 and His134 together coordinate Fe cation. The active site involves Glu135. His138 provides a ligand contact to Fe cation.

This sequence belongs to the polypeptide deformylase family. Fe(2+) is required as a cofactor.

The enzyme catalyses N-terminal N-formyl-L-methionyl-[peptide] + H2O = N-terminal L-methionyl-[peptide] + formate. Its function is as follows. Removes the formyl group from the N-terminal Met of newly synthesized proteins. Requires at least a dipeptide for an efficient rate of reaction. N-terminal L-methionine is a prerequisite for activity but the enzyme has broad specificity at other positions. This is Peptide deformylase from Stutzerimonas stutzeri (strain A1501) (Pseudomonas stutzeri).